Reading from the N-terminus, the 92-residue chain is Acylphosphatase (92 aa).

The 88-residue stretch at 5 to 92 (RWHLLVSGKV…QEFTDFRTTH (88 aa)) folds into the Acylphosphatase-like domain. Residues Arg20 and Asn38 contribute to the active site.

The protein belongs to the acylphosphatase family.

It carries out the reaction an acyl phosphate + H2O = a carboxylate + phosphate + H(+). The sequence is that of Acylphosphatase (acyP) from Marinobacter nauticus (strain ATCC 700491 / DSM 11845 / VT8) (Marinobacter aquaeolei).